The chain runs to 187 residues: ATP synthase subunit b (187 aa).

Residues 4-24 (LALFALLMVPAILLASGHDSG) form a helical membrane-spanning segment.

It belongs to the ATPase B chain family. As to quaternary structure, F-type ATPases have 2 components, F(1) - the catalytic core - and F(0) - the membrane proton channel. F(1) has five subunits: alpha(3), beta(3), gamma(1), delta(1), epsilon(1). F(0) has three main subunits: a(1), b(2) and c(10-14). The alpha and beta chains form an alternating ring which encloses part of the gamma chain. F(1) is attached to F(0) by a central stalk formed by the gamma and epsilon chains, while a peripheral stalk is formed by the delta and b chains.

It localises to the cell inner membrane. Its function is as follows. F(1)F(0) ATP synthase produces ATP from ADP in the presence of a proton or sodium gradient. F-type ATPases consist of two structural domains, F(1) containing the extramembraneous catalytic core and F(0) containing the membrane proton channel, linked together by a central stalk and a peripheral stalk. During catalysis, ATP synthesis in the catalytic domain of F(1) is coupled via a rotary mechanism of the central stalk subunits to proton translocation. Component of the F(0) channel, it forms part of the peripheral stalk, linking F(1) to F(0). The sequence is that of ATP synthase subunit b from Sulfurovum sp. (strain NBC37-1).